The sequence spans 126 residues: Holo-[acyl-carrier-protein] synthase (126 aa).

The Mg(2+) site is built by Asp-9 and Glu-58.

This sequence belongs to the P-Pant transferase superfamily. AcpS family. Mg(2+) serves as cofactor.

The protein localises to the cytoplasm. It catalyses the reaction apo-[ACP] + CoA = holo-[ACP] + adenosine 3',5'-bisphosphate + H(+). Its function is as follows. Transfers the 4'-phosphopantetheine moiety from coenzyme A to a Ser of acyl-carrier-protein. The polypeptide is Holo-[acyl-carrier-protein] synthase (Yersinia enterocolitica serotype O:8 / biotype 1B (strain NCTC 13174 / 8081)).